Here is a 330-residue protein sequence, read N- to C-terminus: Fructose-1,6-bisphosphatase class 1 (330 aa).

Mg(2+) contacts are provided by Glu84, Asp103, Leu105, and Asp106. Substrate contacts are provided by residues 106–109, Asn196, and Lys262; that span reads DGSS. Glu268 provides a ligand contact to Mg(2+).

The protein belongs to the FBPase class 1 family. Homotetramer. It depends on Mg(2+) as a cofactor.

Its subcellular location is the cytoplasm. It catalyses the reaction beta-D-fructose 1,6-bisphosphate + H2O = beta-D-fructose 6-phosphate + phosphate. It functions in the pathway carbohydrate biosynthesis; gluconeogenesis. The polypeptide is Fructose-1,6-bisphosphatase class 1 (Shewanella putrefaciens (strain CN-32 / ATCC BAA-453)).